The chain runs to 410 residues: Peptidase T (410 aa).

Residue His-78 coordinates Zn(2+). Asp-80 is an active-site residue. Asp-140 provides a ligand contact to Zn(2+). Glu-173 functions as the Proton acceptor in the catalytic mechanism. Residues Glu-174, Asp-196, and His-379 each coordinate Zn(2+).

It belongs to the peptidase M20B family. Zn(2+) is required as a cofactor.

The protein resides in the cytoplasm. The enzyme catalyses Release of the N-terminal residue from a tripeptide.. Its function is as follows. Cleaves the N-terminal amino acid of tripeptides. The polypeptide is Peptidase T (Pectobacterium atrosepticum (strain SCRI 1043 / ATCC BAA-672) (Erwinia carotovora subsp. atroseptica)).